A 583-amino-acid chain; its full sequence is 2-succinyl-5-enolpyruvyl-6-hydroxy-3-cyclohexene-1-carboxylate synthase (583 aa).

It belongs to the TPP enzyme family. MenD subfamily. As to quaternary structure, homodimer. Requires Mg(2+) as cofactor. Mn(2+) serves as cofactor. The cofactor is thiamine diphosphate.

The catalysed reaction is isochorismate + 2-oxoglutarate + H(+) = 5-enolpyruvoyl-6-hydroxy-2-succinyl-cyclohex-3-ene-1-carboxylate + CO2. It participates in quinol/quinone metabolism; 1,4-dihydroxy-2-naphthoate biosynthesis; 1,4-dihydroxy-2-naphthoate from chorismate: step 2/7. It functions in the pathway quinol/quinone metabolism; menaquinone biosynthesis. Its function is as follows. Catalyzes the thiamine diphosphate-dependent decarboxylation of 2-oxoglutarate and the subsequent addition of the resulting succinic semialdehyde-thiamine pyrophosphate anion to isochorismate to yield 2-succinyl-5-enolpyruvyl-6-hydroxy-3-cyclohexene-1-carboxylate (SEPHCHC). This Chlorobium luteolum (strain DSM 273 / BCRC 81028 / 2530) (Pelodictyon luteolum) protein is 2-succinyl-5-enolpyruvyl-6-hydroxy-3-cyclohexene-1-carboxylate synthase.